A 349-amino-acid polypeptide reads, in one-letter code: Glycerol-3-phosphate dehydrogenase [NAD(+)], cytoplasmic (349 aa).

10 to 15 (GSGNWG) is an NAD(+) binding site. Substrate is bound at residue K120. NAD(+) is bound at residue A153. At S154 the chain carries Phosphoserine. The active-site Proton acceptor is the K204. Residue R269 coordinates NAD(+). A substrate-binding site is contributed by 269–270 (RN). K289 is modified (N6-succinyllysine). The NAD(+) site is built by K296 and Q298. Phosphotyrosine is present on Y326.

Belongs to the NAD-dependent glycerol-3-phosphate dehydrogenase family. Homodimer.

It localises to the cytoplasm. The catalysed reaction is sn-glycerol 3-phosphate + NAD(+) = dihydroxyacetone phosphate + NADH + H(+). In terms of biological role, has glycerol-3-phosphate dehydrogenase activity. This is Glycerol-3-phosphate dehydrogenase [NAD(+)], cytoplasmic from Mus musculus (Mouse).